The primary structure comprises 307 residues: Bifunctional protein FolD (307 aa).

NADP(+) contacts are provided by residues 170–172, S195, and I236; that span reads GRS.

The protein belongs to the tetrahydrofolate dehydrogenase/cyclohydrolase family. In terms of assembly, homodimer.

It catalyses the reaction (6R)-5,10-methylene-5,6,7,8-tetrahydrofolate + NADP(+) = (6R)-5,10-methenyltetrahydrofolate + NADPH. The enzyme catalyses (6R)-5,10-methenyltetrahydrofolate + H2O = (6R)-10-formyltetrahydrofolate + H(+). It participates in one-carbon metabolism; tetrahydrofolate interconversion. Catalyzes the oxidation of 5,10-methylenetetrahydrofolate to 5,10-methenyltetrahydrofolate and then the hydrolysis of 5,10-methenyltetrahydrofolate to 10-formyltetrahydrofolate. This is Bifunctional protein FolD from Sinorhizobium fredii (strain NBRC 101917 / NGR234).